The primary structure comprises 262 residues: Acyl-[acyl-carrier-protein]--UDP-N-acetylglucosamine O-acyltransferase (262 aa).

Belongs to the transferase hexapeptide repeat family. LpxA subfamily. Homotrimer.

It is found in the cytoplasm. It catalyses the reaction a (3R)-hydroxyacyl-[ACP] + UDP-N-acetyl-alpha-D-glucosamine = a UDP-3-O-[(3R)-3-hydroxyacyl]-N-acetyl-alpha-D-glucosamine + holo-[ACP]. The protein operates within glycolipid biosynthesis; lipid IV(A) biosynthesis; lipid IV(A) from (3R)-3-hydroxytetradecanoyl-[acyl-carrier-protein] and UDP-N-acetyl-alpha-D-glucosamine: step 1/6. Its function is as follows. Involved in the biosynthesis of lipid A, a phosphorylated glycolipid that anchors the lipopolysaccharide to the outer membrane of the cell. This is Acyl-[acyl-carrier-protein]--UDP-N-acetylglucosamine O-acyltransferase from Burkholderia vietnamiensis (strain G4 / LMG 22486) (Burkholderia cepacia (strain R1808)).